Here is a 214-residue protein sequence, read N- to C-terminus: CASP-like protein 0U1 (214 aa).

The Cytoplasmic portion of the chain corresponds to 1–82; it reads MATSEAPLLK…GFTSFYQFKG (82 aa). A helical transmembrane segment spans residues 83–103; the sequence is VVGVYAAFWVYTVLLIGLYLF. The Extracellular portion of the chain corresponds to 104–112; the sequence is SRGPPPGTE. A helical transmembrane segment spans residues 113–133; the sequence is FVVHALFTLCMIAFVSLSVIS. Residues 134–153 are Cytoplasmic-facing; that stretch reads CTSTVIESDYSVCKNAAYAK. The chain crosses the membrane as a helical span at residues 154 to 174; that stretch reads ASLVFAALVVVLNCATCAFVF. Residues 175 to 214 are Extracellular-facing; sequence KQWRSLQFVGMPENFRPFGRHRHKHGHHAGDADDAIPTHP. The tract at residues 194 to 214 is disordered; sequence RHRHKHGHHAGDADDAIPTHP.

The protein belongs to the Casparian strip membrane proteins (CASP) family. As to quaternary structure, homodimer and heterodimers.

Its subcellular location is the cell membrane. The protein is CASP-like protein 0U1 of Ostreococcus tauri.